The primary structure comprises 305 residues: Tetraspanin-12 (305 aa).

Over 1-12 the chain is Cytoplasmic; the sequence is MAREDSVKCLRC. 2 S-palmitoyl cysteine lipidation sites follow: Cys-9 and Cys-12. Residues 13-33 form a helical membrane-spanning segment; it reads LLYALNLLFWLMSISVLAVSA. Topologically, residues 34 to 59 are extracellular; the sequence is WMRDYLNNVLTLTAETRVEEAVILTY. Residues 60–80 form a helical membrane-spanning segment; it reads FPVVHPVMIAVCCFLIIVGML. Residues 81–89 lie on the Cytoplasmic side of the membrane; it reads GYCGTVKRN. Cys-83 carries the S-palmitoyl cysteine lipid modification. Residues 90–110 form a helical membrane-spanning segment; sequence LLLLAWYFGSLLVIFCVELAC. At 111–224 the chain is on the extracellular side; sequence GVWTYEQELM…RGTKQLQVLR (114 aa). Residues 225 to 245 form a helical membrane-spanning segment; that stretch reads FLGISIGVTQILAMILTITLL. Residues 246–305 are Cytoplasmic-facing; sequence WALYYDRREPGTDQMMSLKNDNSQHLSCPSVELLKPSLSRIFEHTSMANSFNTHFEMEEL.

It belongs to the tetraspanin (TM4SF) family. As to quaternary structure, component of a complex, at least composed of TSPAN12, FZD4 and norrin (NDP). Interacts (when palmitoylated) with ADAM10. Interacts with MMP14/MT1-MMP. In terms of processing, palmitoylated; required for interaction with ADAM10. The precise position of palmitoylated residues is unclear and occurs either on Cys-9, Cys-12 and/or Cys-83.

Its subcellular location is the cell membrane. In terms of biological role, regulator of cell surface receptor signal transduction. Plays a central role in retinal vascularization by regulating norrin (NDP) signal transduction. Acts in concert with norrin (NDP) to promote FZD4 multimerization and subsequent activation of FZD4, leading to promote accumulation of beta-catenin (CTNNB1) and stimulate LEF/TCF-mediated transcriptional programs. Suprisingly, it only activates the norrin (NDP)-dependent activation of FZD4, while it does not activate the Wnt-dependent activation of FZD4, suggesting the existence of a Wnt-independent signaling that also promote accumulation the beta-catenin (CTNNB1). Acts as a regulator of membrane proteinases such as ADAM10 and MMP14/MT1-MMP. Activates ADAM10-dependent cleavage activity of amyloid precursor protein (APP). Activates MMP14/MT1-MMP-dependent cleavage activity. The protein is Tetraspanin-12 (TSPAN12) of Homo sapiens (Human).